Reading from the N-terminus, the 75-residue chain is Small ribosomal subunit protein bS18c (75 aa).

This sequence belongs to the bacterial ribosomal protein bS18 family. In terms of assembly, part of the 30S ribosomal subunit.

The protein resides in the plastid. It localises to the chloroplast. The protein is Small ribosomal subunit protein bS18c (rps18) of Anthoceros angustus (Hornwort).